The sequence spans 203 residues: UPF0637 protein SH1846 (203 aa).

The protein belongs to the UPF0637 family.

The sequence is that of UPF0637 protein SH1846 from Staphylococcus haemolyticus (strain JCSC1435).